The primary structure comprises 364 residues: Aminomethyltransferase (364 aa).

The protein belongs to the GcvT family. As to quaternary structure, the glycine cleavage system is composed of four proteins: P, T, L and H.

The catalysed reaction is N(6)-[(R)-S(8)-aminomethyldihydrolipoyl]-L-lysyl-[protein] + (6S)-5,6,7,8-tetrahydrofolate = N(6)-[(R)-dihydrolipoyl]-L-lysyl-[protein] + (6R)-5,10-methylene-5,6,7,8-tetrahydrofolate + NH4(+). Functionally, the glycine cleavage system catalyzes the degradation of glycine. This Thermotoga petrophila (strain ATCC BAA-488 / DSM 13995 / JCM 10881 / RKU-1) protein is Aminomethyltransferase.